The primary structure comprises 223 residues: Interleukin-12 subunit alpha (223 aa).

An N-terminal signal peptide occupies residues 1 to 23; the sequence is MCPSARSLLLLASLVLLEHLGSA. 4 N-linked (GlcNAc...) asparagine glycosylation sites follow: Asn-41, Asn-79, Asn-121, and Asn-176. Disulfide bonds link Cys-66/Cys-200 and Cys-87/Cys-125.

The protein belongs to the IL-6 superfamily. As to quaternary structure, heterodimer with IL12B; disulfide-linked. This heterodimer is known as interleukin IL-12. Heterodimer with EBI3/IL27B; not disulfide-linked. This heterodimer is known as interleukin IL-35. Interacts with NBR1; this interaction promotes IL-12 secretion.

It localises to the secreted. Functionally, heterodimerizes with IL12B to form the IL-12 cytokine or with EBI3/IL27B to form the IL-35 cytokine. IL-12 is primarily produced by professional antigen-presenting cells (APCs) such as B-cells and dendritic cells (DCs) as well as macrophages and granulocytes and regulates T-cell and natural killer-cell responses, induces the production of interferon-gamma (IFN-gamma), favors the differentiation of T-helper 1 (Th1) cells and is an important link between innate resistance and adaptive immunity. Mechanistically, exerts its biological effects through a receptor composed of IL12R1 and IL12R2 subunits. Binding to the receptor results in the rapid tyrosine phosphorylation of a number of cellular substrates including the JAK family kinases TYK2 and JAK2. In turn, recruited STAT4 gets phosphorylated and translocates to the nucleus where it regulates cytokine/growth factor responsive genes. As part of IL-35, plays essential roles in maintaining the immune homeostasis of the liver microenvironment and also functions as an immune-suppressive cytokine. Mediates biological events through unconventional receptors composed of IL12RB2 and gp130/IL6ST heterodimers or homodimers. Signaling requires the transcription factors STAT1 and STAT4, which form a unique heterodimer that binds to distinct DNA sites. This is Interleukin-12 subunit alpha (IL12A) from Marmota monax (Woodchuck).